The chain runs to 263 residues: Proline rich transmembrane protein 1B (263 aa).

Over residues 1–17 the composition is skewed to gly residues; it reads MEAGAGGAGSDTKGGGS. Positions 1 to 107 are disordered; that stretch reads MEAGAGGAGS…IGFVGEPPPY (107 aa). Low complexity-rich tracts occupy residues 37-47 and 75-86; these read QMPAQPALPQL and DAPAQAAGEAGP. The next 2 helical transmembrane spans lie at 190 to 210 and 238 to 258; these read MMES…IAIV and VLFS…YVVV.

It belongs to the CD225/Dispanin family.

The protein localises to the membrane. The sequence is that of Proline rich transmembrane protein 1B from Homo sapiens (Human).